Reading from the N-terminus, the 211-residue chain is Thymidylate kinase (211 aa).

Position 11–18 (11–18) interacts with ATP; sequence GPDGAGKT.

It belongs to the thymidylate kinase family.

The enzyme catalyses dTMP + ATP = dTDP + ADP. Its function is as follows. Phosphorylation of dTMP to form dTDP in both de novo and salvage pathways of dTTP synthesis. The chain is Thymidylate kinase from Streptococcus pyogenes serotype M6 (strain ATCC BAA-946 / MGAS10394).